Reading from the N-terminus, the 295-residue chain is Cytidine deaminase (295 aa).

2 consecutive CMP/dCMP-type deaminase domains span residues 48–168 (SDKE…FGPA) and 187–295 (DDKD…FVNV). 89–91 (NME) is a substrate binding site. Histidine 102 is a binding site for Zn(2+). Glutamate 104 acts as the Proton donor in catalysis. Cysteine 129 and cysteine 132 together coordinate Zn(2+).

Belongs to the cytidine and deoxycytidylate deaminase family. Homodimer. The cofactor is Zn(2+).

It catalyses the reaction cytidine + H2O + H(+) = uridine + NH4(+). The catalysed reaction is 2'-deoxycytidine + H2O + H(+) = 2'-deoxyuridine + NH4(+). This enzyme scavenges exogenous and endogenous cytidine and 2'-deoxycytidine for UMP synthesis. The polypeptide is Cytidine deaminase (Vibrio parahaemolyticus serotype O3:K6 (strain RIMD 2210633)).